A 285-amino-acid chain; its full sequence is ATP synthase gamma chain (285 aa).

Belongs to the ATPase gamma chain family. As to quaternary structure, F-type ATPases have 2 components, CF(1) - the catalytic core - and CF(0) - the membrane proton channel. CF(1) has five subunits: alpha(3), beta(3), gamma(1), delta(1), epsilon(1). CF(0) has three main subunits: a, b and c.

It is found in the cell inner membrane. Produces ATP from ADP in the presence of a proton gradient across the membrane. The gamma chain is believed to be important in regulating ATPase activity and the flow of protons through the CF(0) complex. In Protochlamydia amoebophila (strain UWE25), this protein is ATP synthase gamma chain.